We begin with the raw amino-acid sequence, 610 residues long: Zinc finger protein 823 (610 aa).

The KRAB domain maps to 4–97; the sequence is VAFEDVAVNF…VNKNTPRVNP (94 aa). C2H2-type zinc fingers lie at residues 164–186, 192–214, 220–242, 248–270, 276–298, 304–326, 332–354, 360–382, 388–410, and 416–438; these read FDCK…MAAH, YKCK…ERTH, YECK…ERIH, YECK…ERTH, YKCT…ERTH, YACK…MIRH, HKCK…ETTH, YECK…MITH, QKCK…ERTH, and YQCK…EATH. Residues 444-465 form a C2H2-type 11; atypical zinc finger; it reads YKCQCGKAFSDLSSFQNHETTH. 5 consecutive C2H2-type zinc fingers follow at residues 471–493, 499–521, 527–549, 555–577, and 583–605; these read YECK…KRTH, YECK…ERIH, and YECL…EKTH.

It belongs to the krueppel C2H2-type zinc-finger protein family.

It localises to the nucleus. May be involved in transcriptional regulation. The sequence is that of Zinc finger protein 823 (ZNF823) from Homo sapiens (Human).